Here is a 376-residue protein sequence, read N- to C-terminus: Glutamate 5-kinase (376 aa).

K18 is an ATP binding site. S58, D145, and N157 together coordinate substrate. ATP-binding positions include 177–178 and 218–224; these read SD and TGGMASK. The region spanning 280–358 is the PUA domain; it reads TGALTLDAGA…SELPGELRRP (79 aa).

It belongs to the glutamate 5-kinase family.

It is found in the cytoplasm. It carries out the reaction L-glutamate + ATP = L-glutamyl 5-phosphate + ADP. The protein operates within amino-acid biosynthesis; L-proline biosynthesis; L-glutamate 5-semialdehyde from L-glutamate: step 1/2. In terms of biological role, catalyzes the transfer of a phosphate group to glutamate to form L-glutamate 5-phosphate. The polypeptide is Glutamate 5-kinase (Mycobacterium tuberculosis (strain CDC 1551 / Oshkosh)).